The following is a 184-amino-acid chain: MEPSQCVEELEDDVFQPEDGEPVTQPGSLLSADLFAQSLLDCPLSRLQLFPLTHCCGPGLRPTSQEDKATQTLSPASPSQGVMLPCGVTEEPQRLFYGNAGYRLPLPASFPAVLPIGEQPPEGQWQHQAEVQIARKLQCIADQFHRLHVQQHQQNQNRVWWQILLFLHNLALNGEENRNGAGPR.

Positions 67–75 (DKATQTLSP) are interaction with DLC2. A BH3 motif is present at residues 133 to 147 (IARKLQCIADQFHRL).

It belongs to the Bcl-2 family. Interacts with MCL1, BCL2, BCL2L1/BCL-Xl, BCL2A1 and BCL2L2/BCL-w. Interacts with the myosin V actin motor complex through its binding to DLC2. Isoform 1 is mainly expressed in B-lymphoid cells. Isoform 2 and isoform 3 are mainly expressed in B-CLL and normal B-cells.

May play a role in apoptosis. Isoform 1 seems to be the main initiator. This is Bcl-2-modifying factor (BMF) from Homo sapiens (Human).